Here is a 652-residue protein sequence, read N- to C-terminus: Proline-rich receptor-like protein kinase PERK1 (652 aa).

The interval 1-137 is disordered; that stretch reads MSTAPSPGTT…PPSDSSDGLS (137 aa). Topologically, residues 1–139 are extracellular; the sequence is MSTAPSPGTT…SDSSDGLSTG (139 aa). Residues 8–19 show a composition bias toward pro residues; that stretch reads GTTPSPSPPSPP. N-linked (GlcNAc...) asparagine glycans are attached at residues Asn21 and Asn50. Pro residues predominate over residues 26 to 112; that stretch reads TPPPAASSPP…PSPNQGPPNT (87 aa). Residues 113 to 137 show a composition bias toward low complexity; the sequence is PSGSTPRTPSNTKPSPPSDSSDGLS. Residues 140–160 form a helical membrane-spanning segment; the sequence is VVVGIAIGGVAILVILTLICL. Topologically, residues 161 to 652 are cytoplasmic; that stretch reads LCKKKRRRRH…TGQGYSGPSL (492 aa). The segment at 169–251 is disordered; the sequence is RHDDEAAYYV…GGSDYSDLPV (83 aa). Positions 203–213 are enriched in polar residues; sequence NASRPSDNHVV. A compositionally biased stretch (pro residues) spans 216 to 236; the sequence is LPPPKPPSPPRKPPPPPPPPA. The residue at position 269 (Thr269) is a Phosphothreonine. Positions 280–559 constitute a Protein kinase domain; the sequence is FSEANLLGQG…VRALEGNVSL (280 aa). ATP is bound by residues 286 to 294 and Lys308; that span reads LGQGGFGYV. Position 353 is a phosphotyrosine (Tyr353). Asp404 serves as the catalytic Proton acceptor. A phosphoserine mark is found at Ser408 and Ser437. Residues Thr438 and Thr443 each carry the phosphothreonine modification. Tyr451 bears the Phosphotyrosine mark. Residues 605–616 show a composition bias toward polar residues; sequence YGTTGEYSNPTS. A disordered region spans residues 605 to 652; it reads YGTTGEYSNPTSDYGLYPSGSSSEGQATREMEMGKIKKTGQGYSGPSL.

This sequence belongs to the protein kinase superfamily. Ser/Thr protein kinase family. Mostly expressed in inflorescence bolt, flower buds and siliques, and, to a lower extent, in roots, seedlings and leaves.

The protein localises to the cell membrane. It carries out the reaction L-seryl-[protein] + ATP = O-phospho-L-seryl-[protein] + ADP + H(+). The enzyme catalyses L-threonyl-[protein] + ATP = O-phospho-L-threonyl-[protein] + ADP + H(+). The chain is Proline-rich receptor-like protein kinase PERK1 (PERK1) from Arabidopsis thaliana (Mouse-ear cress).